The primary structure comprises 378 residues: MTYRPATDGPDLASLTLGVEEEFLLLDAETGESMPVAARVLDGLSGVAHAQSRREFRHSMVEMVTPVLSDLAELRRHLVALRTAAADAAEAAGARLVAVGATPVNETHRTVPDEPRYHAMSRRFGPVAHDPAVCGCHVHVGLPDRELAVQVCNHLRPWLPVVQAITANSPLHDGQDTGHASWRAMQLERWPSIGPTPYFDSAADYDATVADLIKAGIMLDAGMVYWYVRPSAAYPTVEIRVGDVCPTVDDTVLVAGLVRALVATVAADVHDGARAPRIRGCLLSAAHWRAAHDGLDGDLVDLRTGRARPAWDLVDDLFALVTPALERQGDRAYVRDQLARVRAEGTGAVRQRRILDRSACDVRAVLDHLAAQTRPAPV.

The protein belongs to the glutamate--cysteine ligase type 2 family. YbdK subfamily.

It catalyses the reaction L-cysteine + L-glutamate + ATP = gamma-L-glutamyl-L-cysteine + ADP + phosphate + H(+). Functionally, ATP-dependent carboxylate-amine ligase which exhibits weak glutamate--cysteine ligase activity. This is Putative glutamate--cysteine ligase 2 from Salinispora arenicola (strain CNS-205).